The chain runs to 1108 residues: TBC1 domain family member 8B (1108 aa).

GRAM domains lie at 143–210 (LRFE…ERTS) and 283–351 (QSFR…ELPD). The region spanning 469-656 (GVPETLRGEL…NVVDCFFYDG (188 aa)) is the Rab-GAP TBC domain. The 36-residue stretch at 822–857 (HSRSLARSAFHLLDENGDGLVNFKEFICGLDILYNR) folds into the EF-hand domain. Residues aspartate 835, asparagine 837, aspartate 839, and glutamate 846 each coordinate Ca(2+). The disordered stretch occupies residues 961–1059 (GRKLQDSSPQ…PTDTPSSPCT (99 aa)). A compositionally biased stretch (low complexity) spans 967–998 (SSPQKTPQTTPTSTSQPESSPTKPTSPESETP). Residues 1010 to 1024 (SPVSQHETAPSHSDI) show a composition bias toward polar residues. Over residues 1025–1057 (TPNSTSHPSTPTSSPTETSSPVLDTPTDTPSSP) the composition is skewed to low complexity.

The protein resides in the cytoplasm. The protein localises to the cytosol. In terms of biological role, involved in vesicular recycling, probably as a GTPase-activating protein for Rab family protein(s). The protein is TBC1 domain family member 8B (tbc1d8b) of Danio rerio (Zebrafish).